The sequence spans 414 residues: 26S proteasome regulatory subunit 6B homolog (414 aa).

Residues 1–33 (MAATMVLDPKPSSTPPPTLPNPYTTDSQSTDSE) are disordered. The span at 21-30 (NPYTTDSQST) shows a compositional bias: low complexity. The stretch at 55–81 (EYVKDELKNLKREQLRSQEEVKRIQSV) forms a coiled coil. An ATP-binding site is contributed by 202–209 (GPPGTGKT).

Belongs to the AAA ATPase family.

The protein resides in the cytoplasm. It is found in the nucleus. The 26S proteasome is involved in the ATP-dependent degradation of ubiquitinated proteins. The regulatory (or ATPase) complex confers ATP dependency and substrate specificity to the 26S complex. In Helianthus annuus (Common sunflower), this protein is 26S proteasome regulatory subunit 6B homolog.